Consider the following 338-residue polypeptide: Methionine import ATP-binding protein MetN 2 (338 aa).

The ABC transporter domain maps to 2–242; sequence IEIEKVCVDF…PQHAFTQQLV (241 aa). An ATP-binding site is contributed by 39–46; it reads GTSGAGKS.

The protein belongs to the ABC transporter superfamily. Methionine importer (TC 3.A.1.24) family. As to quaternary structure, the complex is composed of two ATP-binding proteins (MetN), two transmembrane proteins (MetI) and a solute-binding protein (MetQ).

The protein localises to the cell inner membrane. It catalyses the reaction L-methionine(out) + ATP + H2O = L-methionine(in) + ADP + phosphate + H(+). The catalysed reaction is D-methionine(out) + ATP + H2O = D-methionine(in) + ADP + phosphate + H(+). In terms of biological role, part of the ABC transporter complex MetNIQ involved in methionine import. Responsible for energy coupling to the transport system. The polypeptide is Methionine import ATP-binding protein MetN 2 (Salmonella typhimurium (strain LT2 / SGSC1412 / ATCC 700720)).